We begin with the raw amino-acid sequence, 127 residues long: Small ribosomal subunit protein uS11 (127 aa).

The protein belongs to the universal ribosomal protein uS11 family. Part of the 30S ribosomal subunit.

Located on the platform of the 30S subunit. The chain is Small ribosomal subunit protein uS11 from Picrophilus torridus (strain ATCC 700027 / DSM 9790 / JCM 10055 / NBRC 100828 / KAW 2/3).